We begin with the raw amino-acid sequence, 130 residues long: Large ribosomal subunit protein bL12 (130 aa).

Belongs to the bacterial ribosomal protein bL12 family. As to quaternary structure, homodimer. Part of the ribosomal stalk of the 50S ribosomal subunit. Forms a multimeric L10(L12)X complex, where L10 forms an elongated spine to which 2 to 4 L12 dimers bind in a sequential fashion. Binds GTP-bound translation factors.

Forms part of the ribosomal stalk which helps the ribosome interact with GTP-bound translation factors. Is thus essential for accurate translation. The sequence is that of Large ribosomal subunit protein bL12 from Thermobifida fusca (strain YX).